Here is a 274-residue protein sequence, read N- to C-terminus: Shikimate dehydrogenase (NADP(+)) (274 aa).

Residues 14-16 and threonine 61 each bind shikimate; that span reads SKS. Catalysis depends on lysine 65, which acts as the Proton acceptor. NADP(+) is bound at residue glutamate 77. Asparagine 86 and aspartate 102 together coordinate shikimate. Residues 126–130, 149–154, and methionine 212 contribute to the NADP(+) site; these read GAGGA and NRTLEK. Tyrosine 214 lines the shikimate pocket. Glycine 237 serves as a coordination point for NADP(+).

This sequence belongs to the shikimate dehydrogenase family. Homodimer.

The enzyme catalyses shikimate + NADP(+) = 3-dehydroshikimate + NADPH + H(+). It participates in metabolic intermediate biosynthesis; chorismate biosynthesis; chorismate from D-erythrose 4-phosphate and phosphoenolpyruvate: step 4/7. Its function is as follows. Involved in the biosynthesis of the chorismate, which leads to the biosynthesis of aromatic amino acids. Catalyzes the reversible NADPH linked reduction of 3-dehydroshikimate (DHSA) to yield shikimate (SA). The sequence is that of Shikimate dehydrogenase (NADP(+)) from Actinobacillus pleuropneumoniae serotype 5b (strain L20).